A 268-amino-acid polypeptide reads, in one-letter code: Ribosomal RNA small subunit methyltransferase A (268 aa).

The S-adenosyl-L-methionine site is built by Asn-18, Leu-20, Gly-45, Glu-66, Asp-91, and Asn-112.

Belongs to the class I-like SAM-binding methyltransferase superfamily. rRNA adenine N(6)-methyltransferase family. RsmA subfamily.

The protein resides in the cytoplasm. The enzyme catalyses adenosine(1518)/adenosine(1519) in 16S rRNA + 4 S-adenosyl-L-methionine = N(6)-dimethyladenosine(1518)/N(6)-dimethyladenosine(1519) in 16S rRNA + 4 S-adenosyl-L-homocysteine + 4 H(+). Specifically dimethylates two adjacent adenosines (A1518 and A1519) in the loop of a conserved hairpin near the 3'-end of 16S rRNA in the 30S particle. May play a critical role in biogenesis of 30S subunits. This is Ribosomal RNA small subunit methyltransferase A from Shewanella sp. (strain MR-7).